The sequence spans 346 residues: N-acetyl-gamma-glutamyl-phosphate reductase (346 aa).

The active site involves C151.

The protein belongs to the NAGSA dehydrogenase family. Type 1 subfamily.

It localises to the cytoplasm. It carries out the reaction N-acetyl-L-glutamate 5-semialdehyde + phosphate + NADP(+) = N-acetyl-L-glutamyl 5-phosphate + NADPH + H(+). It participates in amino-acid biosynthesis; L-arginine biosynthesis; N(2)-acetyl-L-ornithine from L-glutamate: step 3/4. In terms of biological role, catalyzes the NADPH-dependent reduction of N-acetyl-5-glutamyl phosphate to yield N-acetyl-L-glutamate 5-semialdehyde. The sequence is that of N-acetyl-gamma-glutamyl-phosphate reductase from Ehrlichia chaffeensis (strain ATCC CRL-10679 / Arkansas).